A 485-amino-acid polypeptide reads, in one-letter code: Glutamate--tRNA ligase 1 (485 aa).

Positions 9–19 match the 'HIGH' region motif; sequence PSPTGHLHIGG. A 'KMSKS' region motif is present at residues 250–254; the sequence is KMSKR. Lys-253 lines the ATP pocket.

Belongs to the class-I aminoacyl-tRNA synthetase family. Glutamate--tRNA ligase type 1 subfamily. As to quaternary structure, monomer.

The protein localises to the cytoplasm. It carries out the reaction tRNA(Glu) + L-glutamate + ATP = L-glutamyl-tRNA(Glu) + AMP + diphosphate. Catalyzes the attachment of glutamate to tRNA(Glu) in a two-step reaction: glutamate is first activated by ATP to form Glu-AMP and then transferred to the acceptor end of tRNA(Glu). The protein is Glutamate--tRNA ligase 1 of Caldicellulosiruptor saccharolyticus (strain ATCC 43494 / DSM 8903 / Tp8T 6331).